The following is a 465-amino-acid chain: Alpha-2A adrenergic receptor (465 aa).

The Extracellular portion of the chain corresponds to 1-48 (MFRQEQPLAEGSFAPMGSLQPDAGNSSWNGTEAPGGGTRATPYSLQVT). N-linked (GlcNAc...) asparagine glycans are attached at residues Asn25 and Asn29. A helical transmembrane segment spans residues 49–74 (LTLVCLAGLLMLFTVFGNVLVIIAVF). The Cytoplasmic segment spans residues 75–85 (TSRALKAPQNL). A helical membrane pass occupies residues 86–111 (FLVSLASADILVATLVIPFSLANEVM). The Extracellular segment spans residues 112–121 (GYWYFGKVWC). Cys121 and Cys203 form a disulfide bridge. A helical transmembrane segment spans residues 122-144 (EIYLALDVLFCTSSIVHLCAISL). Over 145–164 (DRYWSITQAIEYNLKRTPRR) the chain is Cytoplasmic. A helical membrane pass occupies residues 165 to 188 (IKAIIVTVWVISAVISFPPLISIE). Residues 189-207 (KKGAGGGQQPAEPSCKIND) are Extracellular-facing. Residues 208 to 232 (QKWYVISSSIGSFFAPCLIMILVYV) traverse the membrane as a helical segment. The Cytoplasmic portion of the chain corresponds to 233 to 389 (RIYQIAKRRT…RQNREKRFTF (157 aa)). A disordered region spans residues 242–377 (TRVPPSRRGP…RAGGAKASRW (136 aa)). The span at 313 to 330 (SSEHAERPQGPGKPERGP) shows a compositional bias: basic and acidic residues. A Phosphoserine modification is found at Ser346. Residues 353–364 (GAAGPGASGSGQ) are compositionally biased toward gly residues. The residue at position 368 (Arg368) is an Omega-N-methylarginine. A helical transmembrane segment spans residues 390–414 (VLAVVIGVFVVCWFPFFFTYTLIAV). The Extracellular segment spans residues 415 to 424 (GCPVPYQLFN). The helical transmembrane segment at 425 to 445 (FFFWFGYCNSSLNPVIYTIFN) threads the bilayer. Over 446–465 (HDFRRAFKKILCRGDRKRIV) the chain is Cytoplasmic. Cys457 is lipidated: S-palmitoyl cysteine.

The protein belongs to the G-protein coupled receptor 1 family. Adrenergic receptor subfamily. ADRA2A sub-subfamily. Expressed in brain.

The protein resides in the cell membrane. Alpha-2 adrenergic receptors mediate the catecholamine-induced inhibition of adenylate cyclase through the action of G proteins. This Rattus norvegicus (Rat) protein is Alpha-2A adrenergic receptor.